Reading from the N-terminus, the 95-residue chain is Citrate lyase acyl carrier protein (95 aa).

Position 14 is an O-(phosphoribosyl dephospho-coenzyme A)serine (Ser-14).

Belongs to the CitD family. In terms of assembly, oligomer with a subunit composition of (alpha,beta,gamma)6.

It is found in the cytoplasm. Covalent carrier of the coenzyme of citrate lyase. The polypeptide is Citrate lyase acyl carrier protein (Haemophilus influenzae (strain 86-028NP)).